The sequence spans 501 residues: Zinc-binding lipoprotein AdcA (501 aa).

Positions 1–18 (MKKISLLLASLCALFLVA) are cleaved as a signal peptide. Cys-19 carries the N-palmitoyl cysteine lipid modification. Cys-19 carries the S-diacylglycerol cysteine lipid modification. His-63 contributes to the Zn(2+) binding site. The disordered stretch occupies residues 116 to 136 (LPGGEEEEGDHDHGEEGHHHE). The his-rich loop stretch occupies residues 120 to 136 (EEEEGDHDHGEEGHHHE). Over residues 125 to 136 (DHDHGEEGHHHE) the composition is skewed to basic and acidic residues. The Zn(2+) site is built by His-140, His-204, and Glu-279.

Belongs to the bacterial solute-binding protein 9 family.

It localises to the cell membrane. Part of the ATP-binding cassette (ABC) transport system AdcABC involved in zinc import. Binds zinc with high affinity and specificity and delivers it to the membrane permease for translocation into the cytoplasm. Required for transformability. This chain is Zinc-binding lipoprotein AdcA (adcA), found in Streptococcus pneumoniae (strain ATCC BAA-255 / R6).